A 432-amino-acid chain; its full sequence is Glutamyl-tRNA reductase (432 aa).

Substrate is bound by residues 49-52 (TCNR), S107, 112-114 (ETQ), and Q118. C50 functions as the Nucleophile in the catalytic mechanism. An NADP(+)-binding site is contributed by 186–191 (GAGEMG).

Belongs to the glutamyl-tRNA reductase family. Homodimer.

The enzyme catalyses (S)-4-amino-5-oxopentanoate + tRNA(Glu) + NADP(+) = L-glutamyl-tRNA(Glu) + NADPH + H(+). Its pathway is porphyrin-containing compound metabolism; protoporphyrin-IX biosynthesis; 5-aminolevulinate from L-glutamyl-tRNA(Glu): step 1/2. Its function is as follows. Catalyzes the NADPH-dependent reduction of glutamyl-tRNA(Glu) to glutamate 1-semialdehyde (GSA). The protein is Glutamyl-tRNA reductase of Campylobacter jejuni subsp. jejuni serotype O:2 (strain ATCC 700819 / NCTC 11168).